The following is a 674-amino-acid chain: Protein kinase C delta type (674 aa).

Residues 1-106 form the C2 domain; it reads MAPFLRISFN…KNNGKAEFWL (106 aa). Thr-43 and Thr-50 each carry phosphothreonine. Tyr-64 carries the phosphotyrosine modification. Residue Ser-130 is modified to Phosphoserine. Position 141 is a phosphothreonine (Thr-141). Tyr-155 carries the phosphotyrosine modification. The Phorbol-ester/DAG-type 1 zinc finger occupies 158 to 208; the sequence is NHEFIATFFGQPTFCSVCKEFVWGLNKQGYKCRQCNAAIHKKCIDKIIGRC. Residue Thr-218 is modified to Phosphothreonine. The segment at 230 to 280 adopts a Phorbol-ester/DAG-type 2 zinc-finger fold; that stretch reads PHRFKVYNYMSPTFCDHCGSLLWGLVKQGLKCEDCGMNVHHKCREKVANLC. Ser-299 bears the Phosphoserine; by autocatalysis mark. A phosphotyrosine; by SRC mark is found at Tyr-311 and Tyr-332. In terms of domain architecture, Protein kinase spans 347–601; sequence FTFQKVLGKG…TGNIRIHPFF (255 aa). Position 353-361 (353-361) interacts with ATP; the sequence is LGKGSFGKV. Tyr-372 carries the phosphotyrosine modification. Lys-376 provides a ligand contact to ATP. Thr-449 bears the Phosphothreonine mark. Asp-471 functions as the Proton acceptor in the catalytic mechanism. Ser-504 carries the phosphoserine modification. The residue at position 505 (Thr-505) is a Phosphothreonine; by autocatalysis. Tyr-565 carries the post-translational modification Phosphotyrosine. One can recognise an AGC-kinase C-terminal domain in the interval 602–673; that stretch reads KTINWSLLEK…VNPKFEQFLD (72 aa). Residues Ser-643, Ser-652, and Ser-662 each carry the phosphoserine modification.

The protein belongs to the protein kinase superfamily. AGC Ser/Thr protein kinase family. PKC subfamily. As to quaternary structure, interacts with PDPK1 (via N-terminal region). Interacts with RAD9A. Interacts with CDCP1. Interacts with MUC1. Interacts with VASP. Interacts with CAVIN3. Interacts with PRKD2 (via N-terminus and zing-finger domain 1 and 2) in response to oxidative stress; the interaction is independent of PRKD2 tyrosine phosphorylation. Interacts with PLSC3; interaction is enhanced by UV irradiation. Autophosphorylated and/or phosphorylated at Thr-505, within the activation loop; phosphorylation at Thr-505 is not a prerequisite for enzymatic activity. Autophosphorylated at Ser-299. Upon TNFSF10/TRAIL treatment, phosphorylated at Tyr-155; phosphorylation is required for its translocation to the endoplasmic reticulum and cleavage by caspase-3. Phosphorylated at Tyr-311, Tyr-332 and Tyr-565; phosphorylation of Tyr-311 and Tyr-565 following thrombin or zymosan stimulation potentiates its kinase activity. Phosphorylated by protein kinase PDPK1; phosphorylation is inhibited by the apoptotic C-terminal cleavage product of PKN2. Phosphorylated at Tyr-311 through a SYK and SRC mechanism downstream of C-type lectin receptors activation, promoting its activation. In terms of processing, proteolytically cleaved into a catalytic subunit and a regulatory subunit by caspase-3 during apoptosis which results in kinase activation. In terms of tissue distribution, isoform 1 is highly expressed in developing pro- and pre-B-cells and moderately in mature T-cells. Isoform 2 is highly expressed in testis and ovary and at a lower level in thymocytes, brain and kidney.

The protein resides in the cytoplasm. It is found in the perinuclear region. Its subcellular location is the nucleus. The protein localises to the cell membrane. It localises to the mitochondrion. The protein resides in the endomembrane system. The enzyme catalyses L-seryl-[protein] + ATP = O-phospho-L-seryl-[protein] + ADP + H(+). The catalysed reaction is L-threonyl-[protein] + ATP = O-phospho-L-threonyl-[protein] + ADP + H(+). It carries out the reaction L-tyrosyl-[protein] + ATP = O-phospho-L-tyrosyl-[protein] + ADP + H(+). Novel PKCs (PRKCD, PRKCE, PRKCH and PRKCQ) are calcium-insensitive, but activated by diacylglycerol (DAG) and phosphatidylserine. Three specific sites; Thr-505 (activation loop of the kinase domain), Ser-643 (turn motif) and Ser-662 (hydrophobic region), need to be phosphorylated for its full activation. Activated by caspase-3 (CASP3) cleavage during apoptosis. After cleavage, the pseudosubstrate motif in the regulatory subunit is released from the substrate recognition site of the catalytic subunit, which enables PRKCD to become constitutively activated. The catalytic subunit which displays properties of a sphingosine-dependent protein kinase is activated by D-erythro-sphingosine (Sph) or N,N-dimethyl-D-erythrosphingosine (DMS) or N,N,N-trimethyl-D-erythrosphingosine (TMS), but not by ceramide or Sph-1-P and is strongly inhibited by phosphatidylserine. Functionally, calcium-independent, phospholipid- and diacylglycerol (DAG)-dependent serine/threonine-protein kinase that plays contrasting roles in cell death and cell survival by functioning as a pro-apoptotic protein during DNA damage-induced apoptosis, but acting as an anti-apoptotic protein during cytokine receptor-initiated cell death, is involved in tumor suppression, is required for oxygen radical production by NADPH oxidase and acts as a positive or negative regulator in platelet functional responses. Negatively regulates B cell proliferation and also has an important function in self-antigen induced B cell tolerance induction. Upon DNA damage, activates the promoter of the death-promoting transcription factor BCLAF1/Btf to trigger BCLAF1-mediated p53/TP53 gene transcription and apoptosis. In response to oxidative stress, interact with and activate CHUK/IKKA in the nucleus, causing the phosphorylation of p53/TP53. In the case of ER stress or DNA damage-induced apoptosis, can form a complex with the tyrosine-protein kinase ABL1 which trigger apoptosis independently of p53/TP53. In cytosol can trigger apoptosis by activating MAPK11 or MAPK14, inhibiting AKT1 and decreasing the level of X-linked inhibitor of apoptosis protein (XIAP), whereas in nucleus induces apoptosis via the activation of MAPK8 or MAPK9. Upon ionizing radiation treatment, is required for the activation of the apoptosis regulators BAX and BAK, which trigger the mitochondrial cell death pathway. Can phosphorylate MCL1 and target it for degradation which is sufficient to trigger for BAX activation and apoptosis. Is required for the control of cell cycle progression both at G1/S and G2/M phases. Mediates phorbol 12-myristate 13-acetate (PMA)-induced inhibition of cell cycle progression at G1/S phase by up-regulating the CDK inhibitor CDKN1A/p21 and inhibiting the cyclin CCNA2 promoter activity. In response to UV irradiation can phosphorylate CDK1, which is important for the G2/M DNA damage checkpoint activation. Can protect glioma cells from the apoptosis induced by TNFSF10/TRAIL, probably by inducing increased phosphorylation and subsequent activation of AKT1. Can also act as tumor suppressor upon mitogenic stimulation with PMA or TPA. In N-formyl-methionyl-leucyl-phenylalanine (fMLP)-treated cells, is required for NCF1 (p47-phox) phosphorylation and activation of NADPH oxidase activity, and regulates TNF-elicited superoxide anion production in neutrophils, by direct phosphorylation and activation of NCF1 or indirectly through MAPK1/3 (ERK1/2) signaling pathways. Involved in antifungal immunity by mediating phosphorylation and activation of CARD9 downstream of C-type lectin receptors activation, promoting interaction between CARD9 and BCL10, followed by activation of NF-kappa-B and MAP kinase p38 pathways. May also play a role in the regulation of NADPH oxidase activity in eosinophil after stimulation with IL5, leukotriene B4 or PMA. In collagen-induced platelet aggregation, acts a negative regulator of filopodia formation and actin polymerization by interacting with and negatively regulating VASP phosphorylation. Downstream of PAR1, PAR4 and CD36/GP4 receptors, regulates differentially platelet dense granule secretion; acts as a positive regulator in PAR-mediated granule secretion, whereas it negatively regulates CD36/GP4-mediated granule release. Phosphorylates MUC1 in the C-terminal and regulates the interaction between MUC1 and beta-catenin. The catalytic subunit phosphorylates 14-3-3 proteins (YWHAB, YWHAZ and YWHAH) in a sphingosine-dependent fashion. Phosphorylates ELAVL1 in response to angiotensin-2 treatment. Phosphorylates mitochondrial phospholipid scramblase 3 (PLSCR3), resulting in increased cardiolipin expression on the mitochondrial outer membrane which facilitates apoptosis. Phosphorylates SMPD1 which induces SMPD1 secretion. This chain is Protein kinase C delta type, found in Mus musculus (Mouse).